A 573-amino-acid chain; its full sequence is MANSPHGGVLKDLLARDSPRHAELSTEAETLPALLLSERQLCDLELLLNGGFSPLEGFMTEQDYNGVVKENRLASGALFSMPITLDVDQATIDELSLKAGARITLRDFRDDRNLAILTVEDVYKPDKALEAKEVFGGDEEHPAVQYLYKTAKDFYVGGKLEAVNRLQHYDFVELRYTPSELRAHFDKLGWAKVVAFQTRNPMHRAHRELTVRAARSHHANVLIHPVVGLTKPGDIDHFTRVRVYKALLPRYPNGMAVLGLLPLAMRMGGPREAIWHAIIRKNHGATHFIVGRDHAGPGKNSKGVDFYGPYDAQYAVEKYRDELGIEVVPFQMMTYLPDSDEYAPVDQIPQGVRTLNISGTELRARLRSGREIPEWFSYPEVVKVLRESHPPRSQQGFTIFLTGYQNSGKDQIARALQVTLNQQGGRSVSLFLGETVRHELSSELGFSREDRDKNIARIGFVASELTRSGAAVIAAPIAPFEQARQSARELVEKYGDFYLIHVATSLEYCEKTDKRGIYKKARAGEIKGFTGVDDPYEAPAKPNLVVDAETQSVRSIVHQIILLLESQGLLDRF.

The N-terminal stretch occupies residues M1 to Y169. Positions D170 to Q394 are catalytic. Q197 is a binding site for sulfate. ATP contacts are provided by residues Q197 to N200 and G291 to H294. Active-site residues include T198, R199, and N200. R199 is a sulfate binding site. A sulfate-binding site is contributed by A295. Residue M333 participates in ATP binding. The allosteric regulation domain; adenylyl-sulfate kinase-like stretch occupies residues Q395 to F573. 3'-phosphoadenylyl sulfate is bound by residues E434–R437, R451, I477–A478, and R515.

This sequence in the N-terminal section; belongs to the sulfate adenylyltransferase family. The protein in the C-terminal section; belongs to the APS kinase family. As to quaternary structure, homohexamer. Dimer of trimers.

The protein resides in the cytoplasm. The enzyme catalyses sulfate + ATP + H(+) = adenosine 5'-phosphosulfate + diphosphate. Its pathway is sulfur metabolism; hydrogen sulfide biosynthesis; sulfite from sulfate: step 1/3. Its activity is regulated as follows. Allosterically inhibited by 3'-phosphoadenosine 5'-phosphosulfate (PAPS). Catalyzes the first intracellular reaction of sulfate assimilation, forming adenosine-5'-phosphosulfate (APS) from inorganic sulfate and ATP. Plays an important role in sulfate activation as a component of the biosynthesis pathway of sulfur-containing amino acids. The polypeptide is Sulfate adenylyltransferase (Chaetomium globosum (strain ATCC 6205 / CBS 148.51 / DSM 1962 / NBRC 6347 / NRRL 1970) (Soil fungus)).